The primary structure comprises 272 residues: Shikimate dehydrogenase (NADP(+)) (272 aa).

Shikimate is bound by residues 16–18 and Thr-63; that span reads SLS. Residue Lys-67 is the Proton acceptor of the active site. Glu-79 is an NADP(+) binding site. Shikimate-binding residues include Asn-88 and Asp-103. NADP(+) is bound by residues 127–131, 151–156, and Ile-212; these read GAGGA and NRTMSR. Tyr-214 provides a ligand contact to shikimate. Gly-235 contributes to the NADP(+) binding site.

It belongs to the shikimate dehydrogenase family. In terms of assembly, homodimer.

It catalyses the reaction shikimate + NADP(+) = 3-dehydroshikimate + NADPH + H(+). It functions in the pathway metabolic intermediate biosynthesis; chorismate biosynthesis; chorismate from D-erythrose 4-phosphate and phosphoenolpyruvate: step 4/7. Involved in the biosynthesis of the chorismate, which leads to the biosynthesis of aromatic amino acids. Catalyzes the reversible NADPH linked reduction of 3-dehydroshikimate (DHSA) to yield shikimate (SA). This chain is Shikimate dehydrogenase (NADP(+)), found in Staphylococcus epidermidis (strain ATCC 12228 / FDA PCI 1200).